The primary structure comprises 240 residues: NAD(P)H-quinone oxidoreductase subunit K (240 aa).

The [4Fe-4S] cluster site is built by Cys-55, Cys-56, Cys-120, and Cys-151.

The protein belongs to the complex I 20 kDa subunit family. As to quaternary structure, NDH-1 can be composed of about 15 different subunits; different subcomplexes with different compositions have been identified which probably have different functions. [4Fe-4S] cluster is required as a cofactor.

Its subcellular location is the cellular thylakoid membrane. It carries out the reaction a plastoquinone + NADH + (n+1) H(+)(in) = a plastoquinol + NAD(+) + n H(+)(out). The catalysed reaction is a plastoquinone + NADPH + (n+1) H(+)(in) = a plastoquinol + NADP(+) + n H(+)(out). Its function is as follows. NDH-1 shuttles electrons from an unknown electron donor, via FMN and iron-sulfur (Fe-S) centers, to quinones in the respiratory and/or the photosynthetic chain. The immediate electron acceptor for the enzyme in this species is believed to be plastoquinone. Couples the redox reaction to proton translocation, and thus conserves the redox energy in a proton gradient. Cyanobacterial NDH-1 also plays a role in inorganic carbon-concentration. This chain is NAD(P)H-quinone oxidoreductase subunit K, found in Trichodesmium erythraeum (strain IMS101).